The chain runs to 187 residues: Protein GrpE (187 aa).

This sequence belongs to the GrpE family. In terms of assembly, homodimer.

It is found in the cytoplasm. In terms of biological role, participates actively in the response to hyperosmotic and heat shock by preventing the aggregation of stress-denatured proteins, in association with DnaK and GrpE. It is the nucleotide exchange factor for DnaK and may function as a thermosensor. Unfolded proteins bind initially to DnaJ; upon interaction with the DnaJ-bound protein, DnaK hydrolyzes its bound ATP, resulting in the formation of a stable complex. GrpE releases ADP from DnaK; ATP binding to DnaK triggers the release of the substrate protein, thus completing the reaction cycle. Several rounds of ATP-dependent interactions between DnaJ, DnaK and GrpE are required for fully efficient folding. The polypeptide is Protein GrpE (Albidiferax ferrireducens (strain ATCC BAA-621 / DSM 15236 / T118) (Rhodoferax ferrireducens)).